Reading from the N-terminus, the 304-residue chain is Probable endonuclease 4 (304 aa).

Zn(2+) contacts are provided by His-75, His-115, Glu-151, Asp-185, His-188, His-221, Asp-234, His-236, and Glu-266.

It belongs to the AP endonuclease 2 family. The cofactor is Zn(2+).

The enzyme catalyses Endonucleolytic cleavage to 5'-phosphooligonucleotide end-products.. Functionally, endonuclease IV plays a role in DNA repair. It cleaves phosphodiester bonds at apurinic or apyrimidinic (AP) sites, generating a 3'-hydroxyl group and a 5'-terminal sugar phosphate. This chain is Probable endonuclease 4, found in Ureaplasma urealyticum serovar 10 (strain ATCC 33699 / Western).